The primary structure comprises 397 residues: Elongation factor Tu (397 aa).

In terms of domain architecture, tr-type G spans 10 to 206; that stretch reads KPHVNIGTIG…AVDEYIPTPE (197 aa). The segment at 19–26 is G1; it reads GHIDHGKT. 19–26 serves as a coordination point for GTP; the sequence is GHIDHGKT. Thr26 contacts Mg(2+). The interval 62 to 66 is G2; that stretch reads GITIS. A G3 region spans residues 83–86; sequence DCPG. GTP is bound by residues 83 to 87 and 138 to 141; these read DCPGH and NKCD. The tract at residues 138-141 is G4; it reads NKCD. Positions 176-178 are G5; that stretch reads AAF.

The protein belongs to the TRAFAC class translation factor GTPase superfamily. Classic translation factor GTPase family. EF-Tu/EF-1A subfamily. Monomer.

It localises to the cytoplasm. It carries out the reaction GTP + H2O = GDP + phosphate + H(+). In terms of biological role, GTP hydrolase that promotes the GTP-dependent binding of aminoacyl-tRNA to the A-site of ribosomes during protein biosynthesis. The chain is Elongation factor Tu from Nocardioides sp. (strain ATCC BAA-499 / JS614).